The sequence spans 860 residues: Leucine--tRNA ligase (860 aa).

Residues 42 to 52 (PYPSGRLHMGH) carry the 'HIGH' region motif. The short motif at 619–623 (KMSKS) is the 'KMSKS' region element. ATP is bound at residue Lys-622.

The protein belongs to the class-I aminoacyl-tRNA synthetase family.

Its subcellular location is the cytoplasm. The catalysed reaction is tRNA(Leu) + L-leucine + ATP = L-leucyl-tRNA(Leu) + AMP + diphosphate. The polypeptide is Leucine--tRNA ligase (Shigella dysenteriae serotype 1 (strain Sd197)).